A 283-amino-acid chain; its full sequence is 5'-nucleotidase SurE (283 aa).

Positions 14, 15, 47, and 105 each coordinate a divalent metal cation.

The protein belongs to the SurE nucleotidase family. A divalent metal cation serves as cofactor.

It localises to the cytoplasm. It carries out the reaction a ribonucleoside 5'-phosphate + H2O = a ribonucleoside + phosphate. Its function is as follows. Nucleotidase that shows phosphatase activity on nucleoside 5'-monophosphates. This Chlamydia trachomatis serovar D (strain ATCC VR-885 / DSM 19411 / UW-3/Cx) protein is 5'-nucleotidase SurE.